Consider the following 168-residue polypeptide: Thiol peroxidase (168 aa).

A Thioredoxin domain is found at 20–168; the sequence is PAVGSQLPAF…DYDKALAALA (149 aa). Cysteine 62 functions as the Cysteine sulfenic acid (-SOH) intermediate in the catalytic mechanism. An intrachain disulfide couples cysteine 62 to cysteine 96.

The protein belongs to the peroxiredoxin family. Tpx subfamily. As to quaternary structure, homodimer.

The catalysed reaction is a hydroperoxide + [thioredoxin]-dithiol = an alcohol + [thioredoxin]-disulfide + H2O. Its function is as follows. Thiol-specific peroxidase that catalyzes the reduction of hydrogen peroxide and organic hydroperoxides to water and alcohols, respectively. Plays a role in cell protection against oxidative stress by detoxifying peroxides. The sequence is that of Thiol peroxidase from Chlorobaculum tepidum (strain ATCC 49652 / DSM 12025 / NBRC 103806 / TLS) (Chlorobium tepidum).